Consider the following 626-residue polypeptide: Nuclear RNA export factor 1 (626 aa).

The span at 1–16 (MADEGKSYSEHDDERV) shows a compositional bias: basic and acidic residues. A disordered region spans residues 1-85 (MADEGKSYSE…TTRPNRRGDA (85 aa)). Residue Ala2 is modified to N-acetylalanine. The minor non-specific RNA-binding stretch occupies residues 2–60 (ADEGKSYSEHDDERVNFPQRKKKGRGPFRWKYGEGNRRSGRGGSGIRSSRLEEDDGDVA). The interval 2 to 118 (ADEGKSYSEH…GTSQDGTSKN (117 aa)) is RNA-binding (RBD). Positions 2 to 198 (ADEGKSYSEH…IIINPSAPPH (197 aa)) are interaction with ALYREF/THOC4 and LUZP4. Ser9 bears the Phosphoserine mark. A compositionally biased stretch (basic residues) spans 20 to 29 (QRKKKGRGPF). Position 42 is an asymmetric dimethylarginine; alternate (Arg42). Arg42 is subject to Omega-N-methylarginine; alternate. A major non-specific RNA-binding region spans residues 61–118 (MSDAQDGPRVRYNPYTTRPNRRGDAWHDRDRIHVTVRRDRAPPERGGAGTSQDGTSKN). Positions 61–118 (MSDAQDGPRVRYNPYTTRPNRRGDAWHDRDRIHVTVRRDRAPPERGGAGTSQDGTSKN) are RNA binding. The Nuclear localization signal signature appears at 67–100 (GPRVRYNPYTTRPNRRGDAWHDRDRIHVTVRRDR). The short motif at 83 to 110 (GDAWHDRDRIHVTVRRDRAPPERGGAGT) is the Nuclear export signal element. Residues 119–198 (WFKITIPYGR…IIINPSAPPH (80 aa)) enclose the RRM domain. 3'-nitrotyrosine is present on Tyr126. LRR repeat units lie at residues 266 to 291 (ELLSLNLSHNRLYRLDDMSSIVQKVP), 292 to 315 (NLKILNLSGNELKSERELDKIKGL), 316 to 350 (KLEELWLDGNSLCDTFRDQSTYIRSVVACVSAIRE), and 351 to 378 (RFPKLLRLDGHELPPPIAFDVEAPTTLP). The NTF2 domain maps to 393–543 (LVLHFLQQYY…LCIVNDELFV (151 aa)). One can recognise a TAP-C domain in the interval 572–626 (PEQQEMLQAFSTQSGMNLEWSQKCLQDNNWDYTRSAQAFTHLKAKGEIPEVAFMK).

It belongs to the NXF family. Heterodimer (via NTF2 domain) with NXT1. The formation of NXF1-NXT1 heterodimers is required for the NXF1-mediated nuclear mRNA export. Forms a complex with RANBP2/NUP358, NXT1 and RANGAP1. Associates with the exon junction complex (EJC) and with the transcription/export (TREX) complex. Found in a mRNA complex with UPF3A and UPF3B. Found in a post-splicing complex with RBM8A, UPF1, UPF2, UPF3A, UPF3B and RNPS1. Interacts (via N-terminus) with DHX9 (via N-terminus); this interaction is direct and negatively regulates NXF1-mediated nuclear export of constitutive transport element (CTE)-containing cellular mRNAs. Interacts with ALYREF/THOC4. Interacts with FYTTD1/UIF. Interacts with EIF4A3. Interacts with NUPL2. Interacts with THOC5. Interacts with CHTOP. Interacts with FRG1 (via N-terminus). Interacts with LUZP4. Interacts with FMR1; the interaction occurs in a mRNA-dependent and polyribosomes-independent manner in the nucleus. Interacts with CPSF6 (via N-terminus); this interaction is direct. Interacts with RBM15. Interacts with RBM15B. Interacts with MCM3AP; this interaction is not mediated by RNA.

Its subcellular location is the nucleus. It localises to the nucleoplasm. The protein localises to the nucleus speckle. The protein resides in the cytoplasm. Functionally, involved in the nuclear export of mRNA species bearing retroviral constitutive transport elements (CTE) and in the export of mRNA from the nucleus to the cytoplasm (TAP/NFX1 pathway). The NXF1-NXT1 heterodimer is involved in the export of HSP70 mRNA in conjunction with ALYREF/THOC4 and THOC5 components of the TREX complex. ALYREF/THOC4-bound mRNA is thought to be transferred to the NXF1-NXT1 heterodimer for export. Also involved in nuclear export of m6A-containing mRNAs: interaction between SRSF3 and YTHDC1 facilitates m6A-containing mRNA-binding to both SRSF3 and NXF1, promoting mRNA nuclear export. This is Nuclear RNA export factor 1 (NXF1) from Pongo abelii (Sumatran orangutan).